Consider the following 344-residue polypeptide: MGCNPPYLLSYRLRLLLLFTLCLTVLGWATSNYFVGAIQVIPRAKNFMATLHKVMYLGNEETLGHGAAMKKAELANCPSVSPNLRGQNKLVFKPDLTLEEVQAKNPKVSRGRYRPEECKALQRVAVLIPHRNREKHLIYLLEHLHPFLQRQQLDYGIYVIHQTGSKKFNRAKLLNVGYLEALKEENWDCFIFHDVDLVPENDFNLYTCGDQPKHLVVGRNSTGYRLRYSKYFGGVTALSREQFFKVNGFSNNYWGWGGEDDDLRLRVELHKMKISRPKPDVGKYTMIFHTRDKGNEVNGSRMKLLQQMSRVWKTDGLSSCSYRLLSVEHNPLYANITVDFWTAA.

The Cytoplasmic portion of the chain corresponds to 1 to 12; sequence MGCNPPYLLSYR. The chain crosses the membrane as a helical; Signal-anchor for type II membrane protein span at residues 13–38; sequence LRLLLLFTLCLTVLGWATSNYFVGAI. At 39–344 the chain is on the lumenal side; the sequence is QVIPRAKNFM…NITVDFWTAA (306 aa). C77 and C118 are disulfide-bonded. Residues 129–133, 168–170, and 195–196 contribute to the UDP-alpha-D-galactose site; these read PHRNR, FNR, and VD. Residues C189 and C208 are joined by a disulfide bond. D196 contacts Mn(2+). N220 is a glycosylation site (N-linked (GlcNAc...) asparagine). UDP-alpha-D-galactose-binding residues include Y224 and W256. 258-261 serves as a coordination point for N-acetyl-D-glucosamine; it reads GEDD. H289 is a Mn(2+) binding site. Residue 289–291 participates in UDP-alpha-D-galactose binding; it reads HTR. R301 contributes to the N-acetyl-D-glucosamine binding site. N-linked (GlcNAc...) asparagine glycosylation is present at N335.

This sequence belongs to the glycosyltransferase 7 family. As to quaternary structure, interacts with SLC35A2/UGT1. Mn(2+) serves as cofactor.

It is found in the golgi apparatus membrane. The protein localises to the secreted. The enzyme catalyses N-acetyl-D-glucosamine + UDP-alpha-D-galactose = beta-D-galactosyl-(1-&gt;4)-N-acetyl-D-glucosamine + UDP + H(+). The catalysed reaction is a beta-D-GlcNAc-(1-&gt;3)-beta-D-Gal-(1-&gt;4)-beta-D-Glc-(1&lt;-&gt;1)-Cer(d18:1(4E)) + UDP-alpha-D-galactose = a neolactoside nLc4Cer(d18:1(4E)) + UDP + H(+). It catalyses the reaction 3-O-{beta-D-galactosyl-(1-&gt;3)-[6-O-sulfo-N-acetyl-beta-D-glucosaminyl-(1-&gt;6)]-N-acetyl-alpha-D-galactosaminyl}-L-seryl-[protein] + UDP-alpha-D-galactose = 3-O-{beta-D-galactosyl-(1-&gt;3)-[beta-D-galactosyl-(1-&gt;4)-6-O-sulfo-N-acetyl-beta-D-glucosaminyl-(1-&gt;6)]-N-acetyl-alpha-D-galactosaminyl}-L-seryl-[protein] + UDP + H(+). It carries out the reaction 3-O-{beta-D-galactosyl-(1-&gt;3)-[6-O-sulfo-N-acetyl-beta-D-glucosaminyl-(1-&gt;6)]-N-acetyl-alpha-D-galactosaminyl}-L-threonyl-[protein] + UDP-alpha-D-galactose = 3-O-{beta-D-galactosyl-(1-&gt;3)-[beta-D-galactosyl-(1-&gt;4)-6-O-sulfo-N-acetyl-beta-D-glucosaminyl-(1-&gt;6)]-N-acetyl-alpha-D-galactosaminyl}-L-threonyl-[protein] + UDP + H(+). It functions in the pathway protein modification; protein glycosylation. Its pathway is glycolipid biosynthesis. Its function is as follows. Galactose (Gal) transferase involved in the synthesis of terminal N-acetyllactosamine (LacNac) unit present on glycan chains of glycoproteins and glycosphingolipids. Catalyzes the transfer of Gal residue via a beta1-&gt;4 linkage from UDP-Gal to the non-reducing terminal N-acetyl glucosamine 6-O-sulfate (6-O-sulfoGlcNAc) in the linearly growing chain of both N- and O-linked keratan sulfate proteoglycans. Cooperates with B3GNT7 N-acetyl glucosamine transferase and CHST6 and CHST1 sulfotransferases to construct and elongate mono- and disulfated disaccharide units [-&gt;3Galbeta1-&gt;4(6-sulfoGlcNAcbeta)1-&gt;] and [-&gt;3(6-sulfoGalbeta)1-&gt;4(6-sulfoGlcNAcbeta)1-&gt;] within keratan sulfate polymer. Transfers Gal residue via a beta1-&gt;4 linkage to terminal 6-O-sulfoGlcNAc within the LacNac unit of core 2 O-glycans forming 6-sulfo-sialyl-Lewis X (sLex). May contribute to the generation of sLex epitope on mucin-type glycoproteins that serve as ligands for SELL/L-selectin, a major regulator of leukocyte migration. In the biosynthesis pathway of neolacto-series glycosphingolipids, transfers Gal residue via a beta1-&gt;4 linkage to terminal GlcNAc of a lactotriaosylceramide (Lc3Cer) acceptor to form a neolactotetraosylceramide. This chain is Beta-1,4-galactosyltransferase 4 (B4galt4), found in Rattus norvegicus (Rat).